The following is a 644-amino-acid chain: Interleukin-23 receptor (644 aa).

An N-terminal signal peptide occupies residues 1–23 (MSHLTLQLHVVIALYVLFRWCHG). Topologically, residues 24-374 (GITSINCSGD…PASGNHQDIG (351 aa)) are extracellular. N-linked (GlcNAc...) asparagine glycans are attached at residues asparagine 47, asparagine 130, and asparagine 232. Fibronectin type-III domains lie at 127–217 (APSN…LDDI) and 219–318 (IPSA…TSQE). Residues 375–395 (LLSGMVFLAIMLPIFSLIGIF) form a helical membrane-spanning segment. Residues 396–644 (NRSLRIGIKR…HFSRISLFQK (249 aa)) are Cytoplasmic-facing.

Belongs to the type I cytokine receptor family. Type 2 subfamily. As to quaternary structure, heterodimer with IL12RB1. In presence of IL23, the heterodimer forms the IL23 receptor. Interacts with JAK2 and in presence of IL23 with STAT3. Phosphorylated in response to IL23. In terms of tissue distribution, expressed by Th1, Th2 and dendritic cells.

The protein localises to the cell membrane. In terms of biological role, associates with IL12RB1 to form the interleukin-23 receptor. Binds IL23 and mediates T-cells, NK cells and possibly certain macrophage/myeloid cells stimulation probably through activation of the Jak-Stat signaling cascade. IL23 functions in innate and adaptive immunity and may participate in acute response to infection in peripheral tissues. IL23 may be responsible for autoimmune inflammatory diseases and be important for tumorigenesis. The chain is Interleukin-23 receptor (Il23r) from Mus musculus (Mouse).